A 226-amino-acid chain; its full sequence is Probable proteasome subunit beta type-7 (226 aa).

It belongs to the peptidase T1B family. The 26S proteasome consists of a 20S proteasome core and two 19S regulatory subunits. The 20S proteasome core is composed of 28 subunits that are arranged in four stacked rings, resulting in a barrel-shaped structure. The two end rings are each formed by seven alpha subunits, and the two central rings are each formed by seven beta subunits. The catalytic chamber with the active sites is on the inside of the barrel.

It is found in the cytoplasm. It localises to the nucleus. Functionally, non-catalytic component of the proteasome which degrades poly-ubiquitinated proteins in the cytoplasm and in the nucleus. It is essential for the regulated turnover of proteins and for the removal of misfolded proteins. The proteasome is a multicatalytic proteinase complex that is characterized by its ability to cleave peptides with Arg, Phe, Tyr, Leu, and Glu adjacent to the leaving group at neutral or slightly basic pH. It has an ATP-dependent proteolytic activity. In Encephalitozoon cuniculi (strain GB-M1) (Microsporidian parasite), this protein is Probable proteasome subunit beta type-7 (PRE4).